We begin with the raw amino-acid sequence, 428 residues long: Glutamate-1-semialdehyde 2,1-aminomutase (428 aa).

Lysine 265 is subject to N6-(pyridoxal phosphate)lysine.

It belongs to the class-III pyridoxal-phosphate-dependent aminotransferase family. HemL subfamily. In terms of assembly, homodimer. Requires pyridoxal 5'-phosphate as cofactor.

Its subcellular location is the cytoplasm. It carries out the reaction (S)-4-amino-5-oxopentanoate = 5-aminolevulinate. The protein operates within porphyrin-containing compound metabolism; protoporphyrin-IX biosynthesis; 5-aminolevulinate from L-glutamyl-tRNA(Glu): step 2/2. The protein is Glutamate-1-semialdehyde 2,1-aminomutase of Aeromonas salmonicida (strain A449).